The chain runs to 232 residues: 2-C-methyl-D-erythritol 4-phosphate cytidylyltransferase (232 aa).

This sequence belongs to the IspD/TarI cytidylyltransferase family. IspD subfamily.

It carries out the reaction 2-C-methyl-D-erythritol 4-phosphate + CTP + H(+) = 4-CDP-2-C-methyl-D-erythritol + diphosphate. It participates in isoprenoid biosynthesis; isopentenyl diphosphate biosynthesis via DXP pathway; isopentenyl diphosphate from 1-deoxy-D-xylulose 5-phosphate: step 2/6. In terms of biological role, catalyzes the formation of 4-diphosphocytidyl-2-C-methyl-D-erythritol from CTP and 2-C-methyl-D-erythritol 4-phosphate (MEP). The chain is 2-C-methyl-D-erythritol 4-phosphate cytidylyltransferase from Stenotrophomonas maltophilia (strain R551-3).